Here is a 324-residue protein sequence, read N- to C-terminus: Acetyl-coenzyme A carboxylase carboxyl transferase subunit alpha (324 aa).

The CoA carboxyltransferase C-terminal domain maps to 37–291 (ILEEKLENLE…DLMIRKTFEQ (255 aa)).

This sequence belongs to the AccA family. As to quaternary structure, acetyl-CoA carboxylase is a heterohexamer composed of biotin carboxyl carrier protein (AccB), biotin carboxylase (AccC) and two subunits each of ACCase subunit alpha (AccA) and ACCase subunit beta (AccD).

It localises to the cytoplasm. The enzyme catalyses N(6)-carboxybiotinyl-L-lysyl-[protein] + acetyl-CoA = N(6)-biotinyl-L-lysyl-[protein] + malonyl-CoA. It functions in the pathway lipid metabolism; malonyl-CoA biosynthesis; malonyl-CoA from acetyl-CoA: step 1/1. Functionally, component of the acetyl coenzyme A carboxylase (ACC) complex. First, biotin carboxylase catalyzes the carboxylation of biotin on its carrier protein (BCCP) and then the CO(2) group is transferred by the carboxyltransferase to acetyl-CoA to form malonyl-CoA. This chain is Acetyl-coenzyme A carboxylase carboxyl transferase subunit alpha, found in Bacillus cereus (strain B4264).